Here is a 614-residue protein sequence, read N- to C-terminus: Two-component response regulator ORR33 (614 aa).

Residues 14-139 enclose the Response regulatory domain; it reads RVMIIDDDAK…VMARLWRVVA (126 aa). Aspartate 67 is subject to 4-aspartylphosphate. Residues 193 to 220 form a disordered region; it reads RQLTINVVDDGNRGSGSGGGGGGGADAN. The span at 205–217 shows a compositional bias: gly residues; the sequence is RGSGSGGGGGGGA.

This sequence belongs to the ARR family. Type-B subfamily. In terms of processing, two-component system major event consists of a His-to-Asp phosphorelay between a sensor histidine kinase (HK) and a response regulator (RR). In plants, the His-to-Asp phosphorelay involves an additional intermediate named Histidine-containing phosphotransfer protein (HPt). This multistep phosphorelay consists of a His-Asp-His-Asp sequential transfer of a phosphate group between first a His and an Asp of the HK protein, followed by the transfer to a conserved His of the HPt protein and finally the transfer to an Asp in the receiver domain of the RR protein.

Functions as a response regulator involved in His-to-Asp phosphorelay signal transduction system. Phosphorylation of the Asp residue in the receiver domain activates the ability of the protein to promote the transcription of target genes. May directly activate some type-A response regulators in response to cytokinins. The polypeptide is Two-component response regulator ORR33 (Oryza sativa subsp. indica (Rice)).